A 133-amino-acid chain; its full sequence is UPF0225 protein BP2036 (133 aa).

Belongs to the UPF0225 family.

This Bordetella pertussis (strain Tohama I / ATCC BAA-589 / NCTC 13251) protein is UPF0225 protein BP2036.